We begin with the raw amino-acid sequence, 347 residues long: NHL repeat-containing protein 3 (347 aa).

The signal sequence occupies residues 1–22 (MARAWVCLAGAAFFLSCLVLHS). The stretch at 47 to 93 (RLDLGWPKNSEYFTGATFCVAVDSLNGLVYVAQRGDNIPKVLVFSED) is one NHL 1 repeat. Residue Asn-101 is glycosylated (N-linked (GlcNAc...) asparagine). 2 NHL repeats span residues 150–196 (TPGK…LSQD) and 200–243 (LWLR…FDKD). Asn-206 and Asn-278 each carry an N-linked (GlcNAc...) asparagine glycan. The NHL 4 repeat unit spans residues 294-338 (GDCSVVSTIQLADQVLPHLLEVDRKTGAVYVAEIGAKQIQKYIPW).

This is NHL repeat-containing protein 3 (Nhlrc3) from Mus musculus (Mouse).